A 511-amino-acid chain; its full sequence is ATP synthase subunit alpha (511 aa).

169-176 (GDRQTGKT) lines the ATP pocket.

The protein belongs to the ATPase alpha/beta chains family. In terms of assembly, F-type ATPases have 2 components, CF(1) - the catalytic core - and CF(0) - the membrane proton channel. CF(1) has five subunits: alpha(3), beta(3), gamma(1), delta(1), epsilon(1). CF(0) has three main subunits: a(1), b(2) and c(9-12). The alpha and beta chains form an alternating ring which encloses part of the gamma chain. CF(1) is attached to CF(0) by a central stalk formed by the gamma and epsilon chains, while a peripheral stalk is formed by the delta and b chains.

The protein localises to the cell inner membrane. The enzyme catalyses ATP + H2O + 4 H(+)(in) = ADP + phosphate + 5 H(+)(out). Produces ATP from ADP in the presence of a proton gradient across the membrane. The alpha chain is a regulatory subunit. The polypeptide is ATP synthase subunit alpha (Paracoccus denitrificans (strain Pd 1222)).